Reading from the N-terminus, the 279-residue chain is Shikimate dehydrogenase (NADP(+)) (279 aa).

Residues Ser18 to Ser20 and Thr64 each bind shikimate. The Proton acceptor role is filled by Lys68. NADP(+) is bound at residue Glu80. Shikimate-binding residues include Asn89 and Asp104. NADP(+)-binding positions include Gly129 to Ala133, Asn153 to Arg158, and Ile218. Tyr220 contacts shikimate. Residue Gly241 participates in NADP(+) binding.

It belongs to the shikimate dehydrogenase family. As to quaternary structure, homodimer.

The enzyme catalyses shikimate + NADP(+) = 3-dehydroshikimate + NADPH + H(+). Its pathway is metabolic intermediate biosynthesis; chorismate biosynthesis; chorismate from D-erythrose 4-phosphate and phosphoenolpyruvate: step 4/7. Its function is as follows. Involved in the biosynthesis of the chorismate, which leads to the biosynthesis of aromatic amino acids. Catalyzes the reversible NADPH linked reduction of 3-dehydroshikimate (DHSA) to yield shikimate (SA). The protein is Shikimate dehydrogenase (NADP(+)) of Chelativorans sp. (strain BNC1).